The sequence spans 231 residues: NADH-ubiquinone oxidoreductase chain 4 (231 aa).

A run of 6 helical transmembrane segments spans residues 1-21, 34-54, 63-85, 89-111, 118-138, and 156-176; these read PIAG…YGII, LFLP…LTCL, IAYS…TPWG, AMAL…NTTY, ILIL…WWLL, and LLIM…LGLS.

It belongs to the complex I subunit 4 family.

It localises to the mitochondrion membrane. It catalyses the reaction a ubiquinone + NADH + 5 H(+)(in) = a ubiquinol + NAD(+) + 4 H(+)(out). Functionally, core subunit of the mitochondrial membrane respiratory chain NADH dehydrogenase (Complex I) that is believed to belong to the minimal assembly required for catalysis. Complex I functions in the transfer of electrons from NADH to the respiratory chain. The immediate electron acceptor for the enzyme is believed to be ubiquinone. This is NADH-ubiquinone oxidoreductase chain 4 (MT-ND4) from Ovophis okinavensis (Ryukyu Island pit viper).